A 252-amino-acid chain; its full sequence is Triosephosphate isomerase (252 aa).

Substrate is bound at residue 9-11; that stretch reads NWK. Catalysis depends on His95, which acts as the Electrophile. Glu167 (proton acceptor) is an active-site residue. Substrate-binding positions include Gly173, Ser211, and 232–233; that span reads GG.

This sequence belongs to the triosephosphate isomerase family. In terms of assembly, homodimer.

The protein resides in the cytoplasm. It catalyses the reaction D-glyceraldehyde 3-phosphate = dihydroxyacetone phosphate. The protein operates within carbohydrate biosynthesis; gluconeogenesis. It functions in the pathway carbohydrate degradation; glycolysis; D-glyceraldehyde 3-phosphate from glycerone phosphate: step 1/1. Involved in the gluconeogenesis. Catalyzes stereospecifically the conversion of dihydroxyacetone phosphate (DHAP) to D-glyceraldehyde-3-phosphate (G3P). The sequence is that of Triosephosphate isomerase from Marinobacter nauticus (strain ATCC 700491 / DSM 11845 / VT8) (Marinobacter aquaeolei).